The following is a 468-amino-acid chain: ATP synthase subunit beta (468 aa).

155 to 162 serves as a coordination point for ATP; the sequence is GGAGVGKT.

The protein belongs to the ATPase alpha/beta chains family. As to quaternary structure, F-type ATPases have 2 components, CF(1) - the catalytic core - and CF(0) - the membrane proton channel. CF(1) has five subunits: alpha(3), beta(3), gamma(1), delta(1), epsilon(1). CF(0) has three main subunits: a(1), b(2) and c(9-12). The alpha and beta chains form an alternating ring which encloses part of the gamma chain. CF(1) is attached to CF(0) by a central stalk formed by the gamma and epsilon chains, while a peripheral stalk is formed by the delta and b chains.

It localises to the cell membrane. It carries out the reaction ATP + H2O + 4 H(+)(in) = ADP + phosphate + 5 H(+)(out). In terms of biological role, produces ATP from ADP in the presence of a proton gradient across the membrane. The catalytic sites are hosted primarily by the beta subunits. This Streptococcus agalactiae serotype Ia (strain ATCC 27591 / A909 / CDC SS700) protein is ATP synthase subunit beta.